Reading from the N-terminus, the 138-residue chain is Nucleoside diphosphate kinase (138 aa).

ATP contacts are provided by Lys-9, Phe-57, Arg-85, Thr-91, Arg-102, and Asn-112. Catalysis depends on His-115, which acts as the Pros-phosphohistidine intermediate.

The protein belongs to the NDK family. Homotetramer. Mg(2+) is required as a cofactor.

It is found in the cytoplasm. The catalysed reaction is a 2'-deoxyribonucleoside 5'-diphosphate + ATP = a 2'-deoxyribonucleoside 5'-triphosphate + ADP. It catalyses the reaction a ribonucleoside 5'-diphosphate + ATP = a ribonucleoside 5'-triphosphate + ADP. In terms of biological role, major role in the synthesis of nucleoside triphosphates other than ATP. The ATP gamma phosphate is transferred to the NDP beta phosphate via a ping-pong mechanism, using a phosphorylated active-site intermediate. This is Nucleoside diphosphate kinase from Trichlorobacter lovleyi (strain ATCC BAA-1151 / DSM 17278 / SZ) (Geobacter lovleyi).